The sequence spans 172 residues: MAKPTVNINQAIRAREVRVVGADSEQLGIMSLQEALALAEARQLDLVEVSPTAVPPVCRIMDYGKFKYQQSKKLQEARKKQSHVQVKEVKLRPKTDEHDLMTKIKHVRRFIEEGNKAKVTLVFRGREITHLEFGSRALDRVAAELEDIAVVEFKPKMEGRSMFMIVAPKVKK.

Belongs to the IF-3 family. In terms of assembly, monomer.

The protein resides in the cytoplasm. IF-3 binds to the 30S ribosomal subunit and shifts the equilibrium between 70S ribosomes and their 50S and 30S subunits in favor of the free subunits, thus enhancing the availability of 30S subunits on which protein synthesis initiation begins. The polypeptide is Translation initiation factor IF-3 (Geobacter sulfurreducens (strain ATCC 51573 / DSM 12127 / PCA)).